The primary structure comprises 213 residues: Pyrrolidone-carboxylate peptidase (213 aa).

Active-site residues include glutamate 80, cysteine 143, and histidine 166.

The protein belongs to the peptidase C15 family. Homotetramer.

It localises to the cytoplasm. The enzyme catalyses Release of an N-terminal pyroglutamyl group from a polypeptide, the second amino acid generally not being Pro.. Its function is as follows. Removes 5-oxoproline from various penultimate amino acid residues except L-proline. This chain is Pyrrolidone-carboxylate peptidase, found in Clavibacter michiganensis subsp. michiganensis (strain NCPPB 382).